Reading from the N-terminus, the 341-residue chain is HTH-type transcriptional repressor PurR (341 aa).

Positions 2-56 (ATIKDVAKHAGVSTTTVSHVINKTRFVAENTKAAVWAAIKELHYSPSAVARSLKV) constitute an HTH lacI-type domain. The H-T-H motif DNA-binding region spans 4 to 23 (IKDVAKHAGVSTTTVSHVIN). A DNA-binding region spans residues 48–56 (SAVARSLKV). Residues tyrosine 73, arginine 190, threonine 192, phenylalanine 221, and aspartate 275 each contribute to the hypoxanthine site.

As to quaternary structure, homodimer.

The protein operates within purine metabolism; purine nucleotide biosynthesis [regulation]. Functionally, is the main repressor of the genes involved in the de novo synthesis of purine nucleotides, regulating purB, purC, purEK, purF, purHD, purL, purMN and guaBA expression. PurR is allosterically activated to bind its cognate DNA by binding the purine corepressors, hypoxanthine or guanine, thereby effecting transcription repression. This Yersinia pseudotuberculosis serotype O:1b (strain IP 31758) protein is HTH-type transcriptional repressor PurR.